The following is a 216-amino-acid chain: Minor capsid protein P6 (216 aa).

The interval 1–21 is hydrophobic; that stretch reads MILVGIAVLILLAVFAILYYK.

As to quaternary structure, interacts with the major capsid protein.

Its subcellular location is the virion. Its function is as follows. One of the minor capsid proteins that constitute a network internal to the major capsid proteins and outside the lipid membrane. The minor capsid proteins glue and stabilize the capsomers. The polypeptide is Minor capsid protein P6 (Paramecium bursaria Chlorella virus 1 (PBCV-1)).